We begin with the raw amino-acid sequence, 669 residues long: Carnitine O-palmitoyltransferase 2, mitochondrial (669 aa).

The N-terminal 36 residues, 1-36, are a transit peptide targeting the mitochondrion; the sequence is MMAGLLSTQCNSTLSKLKHLSNNPALSVLTSTHRKY. Over 37-190 the chain is Mitochondrial matrix; that stretch reads SSKDGAGSEY…GLLEPEVFHL (154 aa). The note=Mitochondrial inner membrane intramembrane region spans 191-220; it reads NPAKSDTDSFKKLIRWVPPSISWFGAYMVN. Over 221–669 the chain is Mitochondrial matrix; it reads AYPLDMSQYF…FTVLDGNPIH (449 aa). The active-site Proton acceptor is histidine 384. CoA is bound at residue 464-476; that stretch reads GKEQLKKKKLSPD. Positions 498, 500, and 511 each coordinate (R)-carnitine.

Belongs to the carnitine/choline acetyltransferase family.

The protein resides in the mitochondrion inner membrane. The catalysed reaction is (R)-carnitine + hexadecanoyl-CoA = O-hexadecanoyl-(R)-carnitine + CoA. It carries out the reaction octanoyl-CoA + (R)-carnitine = O-octanoyl-(R)-carnitine + CoA. The enzyme catalyses decanoyl-CoA + (R)-carnitine = O-decanoyl-(R)-carnitine + CoA. It catalyses the reaction dodecanoyl-CoA + (R)-carnitine = O-dodecanoyl-R-carnitine + CoA. The catalysed reaction is tetradecanoyl-CoA + (R)-carnitine = O-tetradecanoyl-(R)-carnitine + CoA. It carries out the reaction (R)-carnitine + octadecanoyl-CoA = O-octadecanoyl-(R)-carnitine + CoA. The enzyme catalyses eicosanoyl-CoA + (R)-carnitine = O-eicosanoyl-(R)-carnitine + CoA. It catalyses the reaction (9Z)-tetradecenoyl-CoA + (R)-carnitine = O-(9Z)-tetradecenoyl-(R)-carnitine + CoA. The catalysed reaction is (5Z)-tetradecenoyl-CoA + (R)-carnitine = O-(5Z)-tetradecenoyl-(R)-carnitine + CoA. It carries out the reaction (R)-carnitine + (9Z)-octadecenoyl-CoA = O-(9Z)-octadecenoyl-(R)-carnitine + CoA. The enzyme catalyses 4,8-dimethylnonanoyl-CoA + (R)-carnitine = O-4,8-dimethylnonanoyl-(R)-carnitine + CoA. Its pathway is lipid metabolism; fatty acid beta-oxidation. Functionally, involved in the intramitochondrial synthesis of acylcarnitines from accumulated acyl-CoA metabolites. Reconverts acylcarnitines back into the respective acyl-CoA esters that can then undergo beta-oxidation, an essential step for the mitochondrial uptake of long-chain fatty acids and their subsequent beta-oxidation in the mitochondrion. Active with medium (C8-C12) and long-chain (C14-C18) acyl-CoA esters. This Danio rerio (Zebrafish) protein is Carnitine O-palmitoyltransferase 2, mitochondrial (cpt2).